The sequence spans 149 residues: Endoribonuclease YbeY (149 aa).

Zn(2+) contacts are provided by His-115, His-119, and His-125.

The protein belongs to the endoribonuclease YbeY family. Requires Zn(2+) as cofactor.

It is found in the cytoplasm. Its function is as follows. Single strand-specific metallo-endoribonuclease involved in late-stage 70S ribosome quality control and in maturation of the 3' terminus of the 16S rRNA. This is Endoribonuclease YbeY from Mycoplasmopsis pulmonis (strain UAB CTIP) (Mycoplasma pulmonis).